The following is a 477-amino-acid chain: Delayed-rectifier potassium channel regulatory subunit KCNS2 (477 aa).

The Cytoplasmic segment spans residues 1–184 (MTRQSLWDLS…LALDNPGYSV (184 aa)). A helical membrane pass occupies residues 185 to 206 (LSRVFSVLSILVVLGSIITMCL). Over 207-225 (NSLPDFQIPDSQGNPGEDP) the chain is Extracellular. A helical transmembrane segment spans residues 226 to 248 (RFEIVEHFGIAWFTFELVARFAV). The Cytoplasmic portion of the chain corresponds to 249-259 (APDFLKFFKNA). Residues 260–280 (LNLIDLMSIVPFYITLVVNLV) traverse the membrane as a helical segment. Residues 281–290 (VESSPTLANL) lie on the Extracellular side of the membrane. Residues 291–311 (GRVAQVLRLMRIFRILKLARH) form a helical; Voltage-sensor membrane-spanning segment. The Cytoplasmic segment spans residues 312-326 (STGLRSLGATLKYSY). A helical membrane pass occupies residues 327–348 (KEVGLLLLYLSVGISIFSVVAY). The Extracellular segment spans residues 349–361 (TIEKEENEGLATI). Positions 362–373 (PACWWWATVSMT) form an intramembrane region, helical. The Selectivity filter signature appears at 374 to 379 (TVGYGD). Residues 374-381 (TVGYGDVV) lie within the membrane without spanning it. Residues 382–388 (PGTTAGK) are Extracellular-facing. Residues 389-417 (LTASACILAGILVVVLPITLIFNKFSHFY) traverse the membrane as a helical segment. Over 418 to 477 (RRQKQLESAMRSCDFGDGMKEVPSVNLRDYYAHKVKSLMASLTNMSRSSPSELSLDDSLH) the chain is Cytoplasmic.

This sequence belongs to the potassium channel family. S (TC 1.A.1.2) subfamily. Kv9.2/KCNS2 sub-subfamily. In terms of assembly, heterotetramer with KCNB1 and KCNB2. Does not form homomultimers. In terms of tissue distribution, detected in brain, lung and in pulmonary arteries.

Its subcellular location is the cell membrane. Functionally, potassium channel regulatory subunit that modulate the delayed rectifier voltage-gated potassium channel activity of KCNB1 and KCNB2 by altering their kinetics, expression levels, and shifting the half-inactivation potential to more polarized values. While it does not form functional channels on its own, it can form functional heterotetrameric channels with KCNB1 and KCNB2. Each regulatory subunit has unique regulatory properties that can lead to extensive inhibition, significant changes in kinetics, and/or substantial shifts in the voltage dependencies of the inactivation process. The chain is Delayed-rectifier potassium channel regulatory subunit KCNS2 from Rattus norvegicus (Rat).